Reading from the N-terminus, the 598-residue chain is Elongation factor 4 (598 aa).

Residues lysine 4–lysine 185 form the tr-type G domain. GTP contacts are provided by residues aspartate 16 to threonine 21 and asparagine 132 to aspartate 135.

It belongs to the TRAFAC class translation factor GTPase superfamily. Classic translation factor GTPase family. LepA subfamily.

The protein resides in the cell inner membrane. It carries out the reaction GTP + H2O = GDP + phosphate + H(+). Required for accurate and efficient protein synthesis under certain stress conditions. May act as a fidelity factor of the translation reaction, by catalyzing a one-codon backward translocation of tRNAs on improperly translocated ribosomes. Back-translocation proceeds from a post-translocation (POST) complex to a pre-translocation (PRE) complex, thus giving elongation factor G a second chance to translocate the tRNAs correctly. Binds to ribosomes in a GTP-dependent manner. This is Elongation factor 4 from Campylobacter jejuni subsp. jejuni serotype O:2 (strain ATCC 700819 / NCTC 11168).